Consider the following 632-residue polypeptide: Biosynthetic arginine decarboxylase (632 aa).

N6-(pyridoxal phosphate)lysine is present on lysine 101. Residue 281 to 291 (FDVGGGLGVDY) coordinates substrate.

It belongs to the Orn/Lys/Arg decarboxylase class-II family. SpeA subfamily. Mg(2+) serves as cofactor. Requires pyridoxal 5'-phosphate as cofactor.

The enzyme catalyses L-arginine + H(+) = agmatine + CO2. It functions in the pathway amine and polyamine biosynthesis; agmatine biosynthesis; agmatine from L-arginine: step 1/1. Functionally, catalyzes the biosynthesis of agmatine from arginine. The sequence is that of Biosynthetic arginine decarboxylase from Escherichia coli O157:H7 (strain EC4115 / EHEC).